The following is a 235-amino-acid chain: Adenosine 5'-phosphosulfate reductase (235 aa).

The [4Fe-4S] cluster site is built by Cys121, Cys122, Cys204, and Cys207. Cys230 (nucleophile; cysteine thiosulfonate intermediate) is an active-site residue.

It belongs to the PAPS reductase family. CysH subfamily. It depends on [4Fe-4S] cluster as a cofactor.

The protein localises to the cytoplasm. It carries out the reaction [thioredoxin]-disulfide + sulfite + AMP + 2 H(+) = adenosine 5'-phosphosulfate + [thioredoxin]-dithiol. The protein operates within sulfur metabolism; hydrogen sulfide biosynthesis; sulfite from sulfate. In terms of biological role, catalyzes the formation of sulfite from adenosine 5'-phosphosulfate (APS) using thioredoxin as an electron donor. The protein is Adenosine 5'-phosphosulfate reductase of Geobacillus kaustophilus (strain HTA426).